The chain runs to 301 residues: Radial spoke head 1 homolog (301 aa).

The span at 1 to 20 (MSDLGSEELEEEGENDLGEY) shows a compositional bias: acidic residues. Positions 1 to 41 (MSDLGSEELEEEGENDLGEYEGERNEVGERHGHGKARLPNG) are disordered. MORN repeat units lie at residues 20–43 (YEGE…NGDT), 44–66 (YEGS…NGAR), 67–89 (YTGD…DGSR), 90–112 (YEGE…NNDT), 113–135 (YTGE…ETGS), and 159–181 (YQGK…IGCE). Basic and acidic residues predominate over residues 21–31 (EGERNEVGERH). The disordered stretch occupies residues 225–301 (LSEEQPPPEG…FDEEPSDLQD (77 aa)). Positions 249–261 (PSEDIQAEGFEGE) are enriched in acidic residues. The segment covering 262–278 (LEPRGADEDVDTFRQES) has biased composition (basic and acidic residues). Residues 279-290 (QENSYDIDQGNL) show a composition bias toward polar residues. The segment covering 292–301 (FDEEPSDLQD) has biased composition (acidic residues).

In terms of assembly, component of the axonemal radial spoke 1 (RS1) and 2 (RS2) complexes, at least composed of spoke head proteins RSPH1, RSPH3, RSPH9 and the cilia-specific component RSPH4A or sperm-specific component RSPH6A, spoke stalk proteins RSPH14, DNAJB13, DYDC1, ROPN1L and NME5, and the RS1 complex-specific anchor protein IQUB. Interacts with RSPH3B. Interacts with RSPH4A. Interacts with RSPH6A. Expressed in the trachea, ependymal cells, oviduct and ependymal cells (at protein level). Germ cell specific. Specifically expressed in testis, and to a lower extent in ovary. Not expressed in somatic tissues.

It is found in the cytoplasm. Its subcellular location is the chromosome. The protein resides in the cytoskeleton. The protein localises to the cilium axoneme. It localises to the flagellum axoneme. Functionally, functions as part of axonemal radial spoke complexes that play an important part in the motility of sperm and cilia. The protein is Radial spoke head 1 homolog (Rsph1) of Mus musculus (Mouse).